Here is a 261-residue protein sequence, read N- to C-terminus: Leucine-rich repeat-containing protein 61 (261 aa).

3 LRR repeats span residues 54 to 75 (GLEW…ASLR), 76 to 97 (QLAV…AACE), and 98 to 119 (NLQC…QCLA). The LRRCT domain occupies 138-183 (NPLCASPCYWASVRELLPGLKVLDGERVSGRGSDFYQLCRDLDSSL).

This Bos taurus (Bovine) protein is Leucine-rich repeat-containing protein 61 (LRRC61).